A 129-amino-acid chain; its full sequence is MAKEAGRIRRRERKNIASGIAHVNSSFNNTTITITDAQGNAIAWSSAGTMGFKGSRKSTPYAAQVAAEDVAKKAQEHGMRTLEVEVAGPGSGRESALRALQASGFTVTSIRDVTTIPHNGCRPRKRRRV.

This sequence belongs to the universal ribosomal protein uS11 family. Part of the 30S ribosomal subunit. Interacts with proteins S7 and S18. Binds to IF-3.

Located on the platform of the 30S subunit, it bridges several disparate RNA helices of the 16S rRNA. Forms part of the Shine-Dalgarno cleft in the 70S ribosome. The sequence is that of Small ribosomal subunit protein uS11 from Rhodopseudomonas palustris (strain HaA2).